Reading from the N-terminus, the 170-residue chain is Type II secretion system protein H (170 aa).

Positions Met-1–Gly-5 are cleaved as a propeptide — leader sequence. Phe-6 carries the post-translational modification N-methylphenylalanine. A helical transmembrane segment spans residues Phe-6–Phe-29.

This sequence belongs to the GSP H family. In terms of assembly, type II secretion is composed of four main components: the outer membrane complex, the inner membrane complex, the cytoplasmic secretion ATPase and the periplasm-spanning pseudopilus. Interacts with core component PulG. Cleaved by prepilin peptidase. Post-translationally, methylated by prepilin peptidase at the amino group of the N-terminal phenylalanine once the leader sequence is cleaved by prepilin peptidase.

It localises to the cell inner membrane. Component of the type II secretion system required for the energy-dependent secretion of extracellular factors such as proteases and toxins from the periplasm. Part of the pseudopilus tip complex that is critical for the recognition and binding of secretion substrates. The protein is Type II secretion system protein H (pulH) of Klebsiella pneumoniae.